Here is a 2475-residue protein sequence, read N- to C-terminus: Non-reducing polyketide synthase prhL (2475 aa).

The segment at 14–253 (VLFGSKYSEI…HHADHLSAAQ (240 aa)) is N-terminal acylcarrier protein transacylase domain (SAT). Residues 384-800 (SIPIAVTGLA…GSNAAIVLKE (417 aa)) enclose the Ketosynthase family 3 (KS3) domain. Catalysis depends on for beta-ketoacyl synthase activity residues cysteine 549, histidine 684, and histidine 723. The tract at residues 910-1212 (LCFGGQTGNK…CPMDLSGPQA (303 aa)) is malonyl-CoA:ACP transacylase (MAT) domain. Residue serine 997 is the For acyl/malonyl transferase activity of the active site. Residues 1279–1407 (EGLKLVQLLK…GTISLSPGAN (129 aa)) are N-terminal hotdog fold. The PKS/mFAS DH domain occupies 1279–1586 (EGLKLVQLLK…FTSVSIQSLR (308 aa)). The interval 1282–1585 (KLVQLLKNEG…TFTSVSIQSL (304 aa)) is product template (PT) domain. Histidine 1312 (proton acceptor; for dehydratase activity) is an active-site residue. Residues 1435–1586 (SSSGLKRSTV…FTSVSIQSLR (152 aa)) are C-terminal hotdog fold. Aspartate 1493 functions as the Proton donor; for dehydratase activity in the catalytic mechanism. Positions 1626–1703 (SSNGDDLRTV…ALVQRIFPGR (78 aa)) constitute a Carrier domain. The residue at position 1663 (serine 1663) is an O-(pantetheine 4'-phosphoryl)serine. A methyltransferase (CMeT) domain region spans residues 1865-2098 (HHTSEHKLLH…GFNWVDWTDN (234 aa)). Residues 2127–2475 (SDIHEETVVY…YEFLRSHVRL (349 aa)) are thioesterase (TE) domain. Catalysis depends on for thioesterase activity residues serine 2250 and aspartate 2412.

It catalyses the reaction 3 malonyl-CoA + acetyl-CoA + 2 S-adenosyl-L-methionine = 3,5-dimethylorsellinate + 2 S-adenosyl-L-homocysteine + 3 CO2 + 4 CoA. The protein operates within secondary metabolite biosynthesis; terpenoid biosynthesis. In terms of biological role, non-reducing polyketide synthase; part of the gene cluster that mediates the biosynthesis of paraherquonin, a meroterpenoid with a unique, highly congested hexacyclic molecular architecture. The first step of the pathway is the synthesis of 3,5-dimethylorsellinic acid (DMOA) by the polyketide synthase prhL. Synthesis of DMOA is followed by farnesylation by the prenyltransferase prhE, methylesterification by the methyl-transferase prhM, epoxidation of the prenyl chain by the flavin-dependent monooxygenase prhF, and cyclization of the farnesyl moiety by the terpene cyclase prhH, to yield the tetracyclic intermediate, protoaustinoid A. The short chain dehydrogenase prhI then oxidizes the C-3 alcohol group of the terpene cyclase product to transform protoaustinoid A into protoaustinoid B. The FAD-binding monooxygenase prhJ catalyzes the oxidation of protoaustinoid B into preaustinoid A which is further oxidized into preaustinoid A1 by FAD-binding monooxygenase phrK. Finally, prhA leads to berkeleydione via the berkeleyone B intermediate. PrhA is a multifunctional dioxygenase that first desaturates at C5-C6 to form berkeleyone B, followed by rearrangement of the A/B-ring to form the cycloheptadiene moiety in berkeleydione. Berkeleydione serves as the key intermediate for the biosynthesis of paraherquonin as well as many other meroterpenoids. The cytochrome P450 monooxygenases prhB, prhD, and prhN, as well as the isomerase prhC, are probably involved in the late stage of paraherquonin biosynthesis, after the production of berkeleydione. Especially prhC might be a multifunctional enzyme that catalyzes the D-ring expansion via intramolecular methoxy rearrangement, as well as the hydrolysis of the expanded D-ring. This chain is Non-reducing polyketide synthase prhL, found in Penicillium brasilianum.